The chain runs to 769 residues: Neutral alpha-glucosidase C (769 aa).

D366 acts as the Nucleophile in catalysis. The active site involves E369. The active-site Proton donor is D442.

It belongs to the glycosyl hydrolase 31 family.

The catalysed reaction is Hydrolysis of terminal, non-reducing (1-&gt;4)-linked alpha-D-glucose residues with release of alpha-D-glucose.. Has alpha-glucosidase activity. The chain is Neutral alpha-glucosidase C (GANC) from Macaca fascicularis (Crab-eating macaque).